Reading from the N-terminus, the 138-residue chain is MVEFLNFEVLEDHGWALQDEDLFAKAADANLQSTDFGRFYVDPNDTLLEAAEKNGFAWPFACRGGACTNCAVAVVDGEMPSPASHILPPELTEKGIRLSCIAAPVSDDAKIVYNLKHLPEVSELLLPASRFEQASSTD.

A 2Fe-2S ferredoxin-type domain is found at 27–117; the sequence is ADANLQSTDF…DAKIVYNLKH (91 aa). C62, C67, C70, and C100 together coordinate [2Fe-2S] cluster.

The protein belongs to the 2Fe2S plant-type ferredoxin family. [2Fe-2S] cluster serves as cofactor.

Functionally, ferredoxins are iron-sulfur proteins that transfer electrons in a wide variety of metabolic reactions. This chain is Ferredoxin-2 (fer2), found in Haloarcula marismortui (strain ATCC 43049 / DSM 3752 / JCM 8966 / VKM B-1809) (Halobacterium marismortui).